The primary structure comprises 203 residues: NAD(P)H-quinone oxidoreductase subunit M, chloroplastic (203 aa).

The transit peptide at 1–21 (MAASSSYMACAKFSMLGWLGG) directs the protein to the chloroplast. Low complexity predominate over residues 34–48 (SPQEQAEVQESQEVN). Residues 34–61 (SPQEQAEVQESQEVNAQEEEKVKQPVQP) are disordered.

Belongs to the NDH complex subunit M family. In terms of assembly, part of the chloroplast NDH complex, composed of a mixture of chloroplast and nucleus encoded subunits. Component of the NDH subcomplex A, at least composed of ndhH, ndhI, ndhJ, ndhK, ndhL, ndhM, ndhN and ndhO.

Its subcellular location is the plastid. The protein resides in the chloroplast thylakoid membrane. It carries out the reaction a plastoquinone + NADH + (n+1) H(+)(in) = a plastoquinol + NAD(+) + n H(+)(out). The enzyme catalyses a plastoquinone + NADPH + (n+1) H(+)(in) = a plastoquinol + NADP(+) + n H(+)(out). NDH shuttles electrons from NAD(P)H:plastoquinone, via FMN and iron-sulfur (Fe-S) centers, to quinones in the photosynthetic chain and possibly in a chloroplast respiratory chain. The immediate electron acceptor for the enzyme in this species is believed to be plastoquinone. Couples the redox reaction to proton translocation, and thus conserves the redox energy in a proton gradient. This chain is NAD(P)H-quinone oxidoreductase subunit M, chloroplastic, found in Populus jackii (Balm of Gilead).